Here is an 874-residue protein sequence, read N- to C-terminus: ATP-dependent RNA helicase DDX54 (874 aa).

Residues 1 to 76 (MAAGRRVGPG…FPTSECVSDV (76 aa)) are disordered. Basic residues predominate over residues 20–30 (WKKKRLRKRRT). Position 30 is a phosphothreonine (Thr-30). Ser-33, Ser-38, Ser-40, and Ser-74 each carry phosphoserine. The segment covering 39–50 (DSDDGEFEIQAE) has biased composition (acidic residues). The Q motif signature appears at 95–123 (GGFQSMGLSYPVFKGIMKKGYKVPTPIQR). The Helicase ATP-binding domain occupies 126-298 (IPVILDGKDV…RAGLTEPVLI (173 aa)). 139-146 (ARTGSGKT) is an ATP binding site. A DEAD box motif is present at residues 246-249 (DEAD). The Helicase C-terminal domain occupies 328–472 (YLLQNVVRPQ…ARPCEEPSVA (145 aa)). Polar residues predominate over residues 581–590 (ASSKDPSSQM). A disordered region spans residues 581–687 (ASSKDPSSQM…PKDFDSERGL (107 aa)). Positions 636–645 (TVEGVFTEVV) are enriched in low complexity. The segment covering 664-685 (ETRQRDQEFYVPYRPKDFDSER) has biased composition (basic and acidic residues). A phosphoserine mark is found at Ser-688 and Ser-690. The tract at residues 712-874 (AQNMSRGQQQ…SRKGKMRKRM (163 aa)) is disordered. A compositionally biased stretch (polar residues) spans 713-722 (QNMSRGQQQL). Basic and acidic residues-rich tracts occupy residues 737-747 (QEDKKKIKTES) and 755-771 (YKRDLYQKWKQKQKIDD). Phosphoserine occurs at positions 774 and 780. Basic and acidic residues predominate over residues 812 to 823 (MRSELKTKEQIL). Residues 864–874 (PSRKGKMRKRM) are compositionally biased toward basic residues.

It belongs to the DEAD box helicase family. DDX54/DBP10 subfamily. As to quaternary structure, interacts in a hormone-dependent manner with nuclear receptors.

The protein resides in the nucleus. It is found in the nucleolus. It catalyses the reaction ATP + H2O = ADP + phosphate + H(+). Functionally, has RNA-dependent ATPase activity. Represses the transcriptional activity of nuclear receptors. The polypeptide is ATP-dependent RNA helicase DDX54 (Ddx54) (Mus musculus (Mouse)).